We begin with the raw amino-acid sequence, 205 residues long: Ribosome maturation factor RimP (205 aa).

Residues 1 to 12 (MSNAEAQASSDH) show a composition bias toward polar residues. 2 disordered regions span residues 1-24 (MSNAEAQASSDHTAPGKADTAPAH) and 186-205 (FSHLSEDGLEPEHNGPSEEA).

The protein belongs to the RimP family.

It is found in the cytoplasm. Functionally, required for maturation of 30S ribosomal subunits. The polypeptide is Ribosome maturation factor RimP (Pseudarthrobacter chlorophenolicus (strain ATCC 700700 / DSM 12829 / CIP 107037 / JCM 12360 / KCTC 9906 / NCIMB 13794 / A6) (Arthrobacter chlorophenolicus)).